The chain runs to 319 residues: 4-hydroxy-3-methylbut-2-enyl diphosphate reductase (319 aa).

C15 contributes to the [4Fe-4S] cluster binding site. (2E)-4-hydroxy-3-methylbut-2-enyl diphosphate contacts are provided by H44 and H77. Dimethylallyl diphosphate is bound by residues H44 and H77. H44 and H77 together coordinate isopentenyl diphosphate. Residue C99 participates in [4Fe-4S] cluster binding. H127 lines the (2E)-4-hydroxy-3-methylbut-2-enyl diphosphate pocket. H127 provides a ligand contact to dimethylallyl diphosphate. H127 provides a ligand contact to isopentenyl diphosphate. Catalysis depends on E129, which acts as the Proton donor. Residue T172 coordinates (2E)-4-hydroxy-3-methylbut-2-enyl diphosphate. C202 contacts [4Fe-4S] cluster. Residues S230, S231, N232, and S274 each contribute to the (2E)-4-hydroxy-3-methylbut-2-enyl diphosphate site. Dimethylallyl diphosphate contacts are provided by S230, S231, N232, and S274. Residues S230, S231, N232, and S274 each contribute to the isopentenyl diphosphate site.

This sequence belongs to the IspH family. It depends on [4Fe-4S] cluster as a cofactor.

The catalysed reaction is isopentenyl diphosphate + 2 oxidized [2Fe-2S]-[ferredoxin] + H2O = (2E)-4-hydroxy-3-methylbut-2-enyl diphosphate + 2 reduced [2Fe-2S]-[ferredoxin] + 2 H(+). It carries out the reaction dimethylallyl diphosphate + 2 oxidized [2Fe-2S]-[ferredoxin] + H2O = (2E)-4-hydroxy-3-methylbut-2-enyl diphosphate + 2 reduced [2Fe-2S]-[ferredoxin] + 2 H(+). It participates in isoprenoid biosynthesis; dimethylallyl diphosphate biosynthesis; dimethylallyl diphosphate from (2E)-4-hydroxy-3-methylbutenyl diphosphate: step 1/1. Its pathway is isoprenoid biosynthesis; isopentenyl diphosphate biosynthesis via DXP pathway; isopentenyl diphosphate from 1-deoxy-D-xylulose 5-phosphate: step 6/6. Its function is as follows. Catalyzes the conversion of 1-hydroxy-2-methyl-2-(E)-butenyl 4-diphosphate (HMBPP) into a mixture of isopentenyl diphosphate (IPP) and dimethylallyl diphosphate (DMAPP). Acts in the terminal step of the DOXP/MEP pathway for isoprenoid precursor biosynthesis. The sequence is that of 4-hydroxy-3-methylbut-2-enyl diphosphate reductase from Xanthomonas euvesicatoria pv. vesicatoria (strain 85-10) (Xanthomonas campestris pv. vesicatoria).